A 461-amino-acid polypeptide reads, in one-letter code: Na(+)/H(+) antiporter NhaA (461 aa).

Residues 1 to 23 (MILSTQRLGRFMSPAPTPAPDAK) are disordered. 12 helical membrane-spanning segments follow: residues 48 to 68 (VGGA…NSPV), 89 to 109 (LSLG…LVGL), 127 to 147 (IVPV…YAAV), 157 to 177 (GWAI…AIIG), 186 to 206 (IFLL…IAFF), 211 to 231 (IQAA…FLAQ), 236 to 256 (FFGA…IVTW), 257 to 277 (ALVH…GFAV), 305 to 325 (ISAG…AVGG), 339 to 359 (IGII…TTWI), 374 to 394 (WIDV…SLLV), and 408 to 428 (HAKV…TVVL).

Belongs to the NhaA Na(+)/H(+) (TC 2.A.33) antiporter family.

The protein localises to the cell membrane. It carries out the reaction Na(+)(in) + 2 H(+)(out) = Na(+)(out) + 2 H(+)(in). In terms of biological role, na(+)/H(+) antiporter that extrudes sodium in exchange for external protons. The chain is Na(+)/H(+) antiporter NhaA from Arthrobacter sp. (strain FB24).